The following is a 349-amino-acid chain: Oxygen-dependent coproporphyrinogen-III oxidase (349 aa).

Disordered regions lie at residues M1 to R21 and S37 to K60. S105 lines the substrate pocket. A divalent metal cation is bound by residues H109 and H119. H119 functions as the Proton donor in the catalytic mechanism. N121–R123 is a substrate binding site. Residues H153 and H183 each contribute to the a divalent metal cation site. The segment at Y273 to E308 is important for dimerization.

The protein belongs to the aerobic coproporphyrinogen-III oxidase family. Homodimer. A divalent metal cation is required as a cofactor.

The protein localises to the cytoplasm. The catalysed reaction is coproporphyrinogen III + O2 + 2 H(+) = protoporphyrinogen IX + 2 CO2 + 2 H2O. It functions in the pathway porphyrin-containing compound metabolism; protoporphyrin-IX biosynthesis; protoporphyrinogen-IX from coproporphyrinogen-III (O2 route): step 1/1. Its function is as follows. Involved in the heme and chlorophyll biosynthesis. Catalyzes the aerobic oxidative decarboxylation of propionate groups of rings A and B of coproporphyrinogen-III to yield the vinyl groups in protoporphyrinogen-IX. In Prochlorococcus marinus (strain MIT 9313), this protein is Oxygen-dependent coproporphyrinogen-III oxidase.